The following is a 117-amino-acid chain: Non-specific lipid-transfer protein (117 aa).

Positions 1-26 (MACSAMTKLALVVALCMVVSVPIAQA) are cleaved as a signal peptide. 4 cysteine pairs are disulfide-bonded: C29-C76, C39-C53, C54-C99, and C74-C113.

This sequence belongs to the plant LTP family.

Plant non-specific lipid-transfer proteins transfer phospholipids as well as galactolipids across membranes. May play a role in wax or cutin deposition in the cell walls of expanding epidermal cells and certain secretory tissues. The polypeptide is Non-specific lipid-transfer protein (Prunus avium (Cherry)).